Consider the following 475-residue polypeptide: Crocetin glucosyltransferase 3 (475 aa).

H16 acts as the Proton acceptor in catalysis. H16 is an an anthocyanidin binding site. D123 serves as the catalytic Charge relay. UDP-alpha-D-glucose-binding residues include T144, A354, Q356, H371, W374, N375, S376, and E379. A394 contacts an anthocyanidin. UDP-alpha-D-glucose-binding residues include E395 and Q396.

This sequence belongs to the UDP-glycosyltransferase family. Mainly expressed in stamens.

The enzyme catalyses crocetin + UDP-alpha-D-glucose = beta-D-glucosyl crocetin + UDP. It catalyses the reaction beta-D-glucosyl crocetin + UDP-alpha-D-glucose = bis(beta-D-glucosyl) crocetin + UDP. It carries out the reaction beta-D-gentiobiosyl crocetin + UDP-alpha-D-glucose = beta-D-gentiobiosyl beta-D-glucosyl crocetin + UDP. Crocetin glucosyltransferase involved in the synthesis of crocin, one of the apocarotenoids responsible for the color and bitter taste of saffron. This chain is Crocetin glucosyltransferase 3 (GLT3), found in Crocus sativus (Saffron).